Here is a 558-residue protein sequence, read N- to C-terminus: Protein NRT1/ PTR FAMILY 2.3 (558 aa).

Helical transmembrane passes span 33–53 (TLLG…VFLI), 69–89 (VANG…DSFF), 92–112 (IPVI…LTLI), 128–148 (VLCT…LALV), 176–196 (FFNW…TAIV), 203–223 (SWKL…IVFV), 329–349 (LWLS…LIVL), 371–391 (VIII…VFPM), 403–423 (LQKV…SAVV), 439–459 (VLWL…QFPA), 478–498 (SLTS…IDLI), and 517–537 (VYWL…VCSW).

Belongs to the major facilitator superfamily. Proton-dependent oligopeptide transporter (POT/PTR) (TC 2.A.17) family. As to expression, expressed in flowers, siliques and root epidermis or cortex. Detected in shoots.

The protein resides in the membrane. Transporter involved in a passive nitrate efflux. This Arabidopsis thaliana (Mouse-ear cress) protein is Protein NRT1/ PTR FAMILY 2.3 (NPF2.3).